Here is a 2476-residue protein sequence, read N- to C-terminus: Non-reducing polyketide synthase pkdA (2476 aa).

Positions 22 to 230 (PNLNDAYLQS…VISEARLATL (209 aa)) are N-terminal acylcarrier protein transacylase domain (SAT). Cys-142 functions as the Nucleophile; for transacylase activity in the catalytic mechanism. His-261 acts as the Proton donor/acceptor; for transacylase activity in catalysis. Residues 388–805 (DESIAVVGMA…GSNASLVVTQ (418 aa)) form the Ketosynthase family 3 (KS3) domain. Catalysis depends on for beta-ketoacyl synthase activity residues Cys-554, His-689, and His-728. Residues 919–1204 (FGGQRSSFVG…GSGVTNLASR (286 aa)) form a malonyl-CoA:ACP transacylase (MAT) region. The segment at 1290–1417 (QKGLWTFVGY…GRITFQTPKQ (128 aa)) is N-terminal hotdog fold. The PKS/mFAS DH domain maps to 1290 to 1592 (QKGLWTFVGY…FVEVSIAGMS (303 aa)). Residues 1321–1590 (YVSAHVIAQT…LHFVEVSIAG (270 aa)) are product template (PT) domain. The Proton acceptor; for dehydratase activity role is filled by His-1325. The tract at residues 1445–1592 (QTIQGSRNIY…FVEVSIAGMS (148 aa)) is C-terminal hotdog fold. Residue Asp-1501 is the Proton donor; for dehydratase activity of the active site. The interval 1626–1649 (DVSKNEKDAKAPSKKKESTSKSPG) is disordered. Residues 1650-1724 (HDILARVRTL…SLVKCIGANM (75 aa)) enclose the Carrier domain. Position 1684 is an O-(pantetheine 4'-phosphoryl)serine (Ser-1684). Positions 1727-1766 (SDTSRTGDDSSDDLETASAESETSSGINNEDSHNIDRQQI) are disordered. Low complexity predominate over residues 1742 to 1751 (TASAESETSS). The interval 1881-2030 (ELLRQYPEHA…DCEKTPSSHL (150 aa)) is methyltransferase (CMeT) domain. An NADPH-binding domain region spans residues 2094–2340 (VTGATGSLGS…SWCPVDDVAA (247 aa)).

The cofactor is pantetheine 4'-phosphate.

It catalyses the reaction propanoyl-CoA + 3 malonyl-CoA + AH2 + 2 S-adenosyl-L-methionine + H(+) = 2-ethyl-4,6-dihydroxy-3,5-dimethylbenzaldehyde + A + 2 S-adenosyl-L-homocysteine + 3 CO2 + 4 CoA + H2O. Its pathway is secondary metabolite biosynthesis. Non-reducing polyketide synthase that synthesizes 6-ethyl-2,4-dihydroxy-3,5-dimethylbenzaldehyde via condensation of one propanoyl-CoA starter unit with 3 malonyl-CoA units, as well as 2 methylation steps. In Emericella nidulans (strain FGSC A4 / ATCC 38163 / CBS 112.46 / NRRL 194 / M139) (Aspergillus nidulans), this protein is Non-reducing polyketide synthase pkdA.